A 117-amino-acid chain; its full sequence is Large ribosomal subunit protein bL19 (117 aa).

It belongs to the bacterial ribosomal protein bL19 family.

This protein is located at the 30S-50S ribosomal subunit interface and may play a role in the structure and function of the aminoacyl-tRNA binding site. This Leptothrix cholodnii (strain ATCC 51168 / LMG 8142 / SP-6) (Leptothrix discophora (strain SP-6)) protein is Large ribosomal subunit protein bL19.